The following is a 443-amino-acid chain: Chromosomal replication initiator protein DnaA (443 aa).

The tract at residues 1-73 (MYGDHRQIWE…YDAASKATNK (73 aa)) is domain I, interacts with DnaA modulators. Positions 73 to 106 (KLYEIKILSEDEEEYREIKESIEKENLTESTTLS) are domain II. Positions 107–323 (TLNPKYTFDT…GALIRIVAFS (217 aa)) are domain III, AAA+ region. 4 residues coordinate ATP: G151, G153, K154, and T155. The tract at residues 324–443 (NLTKANIDLE…EELKKRIKGY (120 aa)) is domain IV, binds dsDNA.

The protein belongs to the DnaA family. In terms of assembly, oligomerizes as a right-handed, spiral filament on DNA at oriC.

Its subcellular location is the cytoplasm. Its function is as follows. Plays an essential role in the initiation and regulation of chromosomal replication. ATP-DnaA binds to the origin of replication (oriC) to initiate formation of the DNA replication initiation complex once per cell cycle. Binds the DnaA box (a 9 base pair repeat at the origin) and separates the double-stranded (ds)DNA. Forms a right-handed helical filament on oriC DNA; dsDNA binds to the exterior of the filament while single-stranded (ss)DNA is stabiized in the filament's interior. The ATP-DnaA-oriC complex binds and stabilizes one strand of the AT-rich DNA unwinding element (DUE), permitting loading of DNA polymerase. After initiation quickly degrades to an ADP-DnaA complex that is not apt for DNA replication. Binds acidic phospholipids. The polypeptide is Chromosomal replication initiator protein DnaA (Thermoanaerobacter pseudethanolicus (strain ATCC 33223 / 39E) (Clostridium thermohydrosulfuricum)).